A 362-amino-acid chain; its full sequence is Bifunctional chorismate mutase/prephenate dehydratase (362 aa).

One can recognise a Chorismate mutase domain in the interval 3–91; it reads QTIDELLIPH…ECLAVERPLT (89 aa). The substrate site is built by Arg-13, Arg-30, Lys-41, and Glu-52. The Prephenate dehydratase domain maps to 92–269; the sequence is IAYLGPQGTF…NTTRFLVMGH (178 aa). Residues 281–356 enclose the ACT domain; the sequence is SLAVSAPNRA…RASFVKAIGS (76 aa).

The protein resides in the cytoplasm. It catalyses the reaction chorismate = prephenate. The catalysed reaction is prephenate + H(+) = 3-phenylpyruvate + CO2 + H2O. It participates in amino-acid biosynthesis; L-phenylalanine biosynthesis; phenylpyruvate from prephenate: step 1/1. The protein operates within metabolic intermediate biosynthesis; prephenate biosynthesis; prephenate from chorismate: step 1/1. Catalyzes the Claisen rearrangement of chorismate to prephenate and the decarboxylation/dehydration of prephenate to phenylpyruvate. The chain is Bifunctional chorismate mutase/prephenate dehydratase (pheA) from Neisseria gonorrhoeae (strain ATCC 700825 / FA 1090).